A 132-amino-acid chain; its full sequence is Fatty acid-binding protein, adipocyte (132 aa).

Position 2 is an N-acetylcysteine (cysteine 2). Serine 13 carries the phosphoserine modification. Tyrosine 20 bears the Phosphotyrosine; by Tyr-kinases mark. Positions 22–32 (KEVGVGFATRK) match the Nuclear localization signal motif. An a fatty acid-binding site is contributed by 127–129 (RVY).

Belongs to the calycin superfamily. Fatty-acid binding protein (FABP) family. Monomer. Homodimer. Interacts with PPARG.

Its subcellular location is the cytoplasm. The protein localises to the nucleus. In terms of biological role, lipid transport protein in adipocytes. Binds both long chain fatty acids and retinoic acid. Delivers long-chain fatty acids and retinoic acid to their cognate receptors in the nucleus. The sequence is that of Fatty acid-binding protein, adipocyte (FABP4) from Cervus elaphus (Red deer).